Reading from the N-terminus, the 230-residue chain is Cytochrome c oxidase subunit 2 (230 aa).

Residues 1–14 are Mitochondrial intermembrane-facing; the sequence is MAHPTQLGFKDAAM. A helical membrane pass occupies residues 15 to 45; that stretch reads PVMEELLHFHDHALMIVLLISTLVLYIITAM. The Mitochondrial matrix portion of the chain corresponds to 46 to 59; that stretch reads VSTKLTNKYILDSQ. Residues 60 to 87 form a helical membrane-spanning segment; sequence EIEIVWTILPAVILVLIALPSLRILYLM. At 88-230 the chain is on the mitochondrial intermembrane side; the sequence is DEINDPHLTI…NWSSLMLEDA (143 aa). Residues histidine 161, cysteine 196, glutamate 198, cysteine 200, histidine 204, and methionine 207 each contribute to the Cu cation site. Mg(2+) is bound at residue glutamate 198.

The protein belongs to the cytochrome c oxidase subunit 2 family. Component of the cytochrome c oxidase (complex IV, CIV), a multisubunit enzyme composed of 14 subunits. The complex is composed of a catalytic core of 3 subunits MT-CO1, MT-CO2 and MT-CO3, encoded in the mitochondrial DNA, and 11 supernumerary subunits COX4I, COX5A, COX5B, COX6A, COX6B, COX6C, COX7A, COX7B, COX7C, COX8 and NDUFA4, which are encoded in the nuclear genome. The complex exists as a monomer or a dimer and forms supercomplexes (SCs) in the inner mitochondrial membrane with NADH-ubiquinone oxidoreductase (complex I, CI) and ubiquinol-cytochrome c oxidoreductase (cytochrome b-c1 complex, complex III, CIII), resulting in different assemblies (supercomplex SCI(1)III(2)IV(1) and megacomplex MCI(2)III(2)IV(2)). Found in a complex with TMEM177, COA6, COX18, COX20, SCO1 and SCO2. Interacts with TMEM177 in a COX20-dependent manner. Interacts with COX20. Interacts with COX16. It depends on Cu cation as a cofactor.

The protein localises to the mitochondrion inner membrane. It catalyses the reaction 4 Fe(II)-[cytochrome c] + O2 + 8 H(+)(in) = 4 Fe(III)-[cytochrome c] + 2 H2O + 4 H(+)(out). In terms of biological role, component of the cytochrome c oxidase, the last enzyme in the mitochondrial electron transport chain which drives oxidative phosphorylation. The respiratory chain contains 3 multisubunit complexes succinate dehydrogenase (complex II, CII), ubiquinol-cytochrome c oxidoreductase (cytochrome b-c1 complex, complex III, CIII) and cytochrome c oxidase (complex IV, CIV), that cooperate to transfer electrons derived from NADH and succinate to molecular oxygen, creating an electrochemical gradient over the inner membrane that drives transmembrane transport and the ATP synthase. Cytochrome c oxidase is the component of the respiratory chain that catalyzes the reduction of oxygen to water. Electrons originating from reduced cytochrome c in the intermembrane space (IMS) are transferred via the dinuclear copper A center (CU(A)) of subunit 2 and heme A of subunit 1 to the active site in subunit 1, a binuclear center (BNC) formed by heme A3 and copper B (CU(B)). The BNC reduces molecular oxygen to 2 water molecules using 4 electrons from cytochrome c in the IMS and 4 protons from the mitochondrial matrix. The polypeptide is Cytochrome c oxidase subunit 2 (mt-co2) (Cyprinus carpio (Common carp)).